The primary structure comprises 284 residues: Cytosolic Fe-S cluster assembly factor NUBP2 homolog (284 aa).

Residue 27-34 coordinates ATP; it reads GKGGVGKS. Residues cysteine 200 and cysteine 203 each coordinate [4Fe-4S] cluster.

It belongs to the Mrp/NBP35 ATP-binding proteins family. NUBP2/CFD1 subfamily. In terms of assembly, heterotetramer of 2 NUBP1 and 2 NUBP2 chains. The cofactor is [4Fe-4S] cluster.

The protein localises to the cytoplasm. In terms of biological role, component of the cytosolic iron-sulfur (Fe/S) protein assembly (CIA) machinery. Required for maturation of extramitochondrial Fe-S proteins. The NUBP1-NUBP2 heterotetramer forms a Fe-S scaffold complex, mediating the de novo assembly of an Fe-S cluster and its transfer to target apoproteins. This Monosiga brevicollis (Choanoflagellate) protein is Cytosolic Fe-S cluster assembly factor NUBP2 homolog.